The sequence spans 218 residues: Pyridoxine/pyridoxamine 5'-phosphate oxidase (218 aa).

FMN-binding positions include 66–71, arginine 87, lysine 88, and glutamine 110; that span reads RVVLLK. Lysine 71 serves as a coordination point for substrate. Substrate is bound by residues tyrosine 128, arginine 132, and serine 136. FMN is bound by residues 145–146 and tryptophan 190; that span reads QS. Residue 196 to 198 coordinates substrate; it reads RLH. Arginine 200 is an FMN binding site.

This sequence belongs to the pyridoxamine 5'-phosphate oxidase family. As to quaternary structure, homodimer. It depends on FMN as a cofactor.

It carries out the reaction pyridoxamine 5'-phosphate + O2 + H2O = pyridoxal 5'-phosphate + H2O2 + NH4(+). The enzyme catalyses pyridoxine 5'-phosphate + O2 = pyridoxal 5'-phosphate + H2O2. It participates in cofactor metabolism; pyridoxal 5'-phosphate salvage; pyridoxal 5'-phosphate from pyridoxamine 5'-phosphate: step 1/1. It functions in the pathway cofactor metabolism; pyridoxal 5'-phosphate salvage; pyridoxal 5'-phosphate from pyridoxine 5'-phosphate: step 1/1. Its function is as follows. Catalyzes the oxidation of either pyridoxine 5'-phosphate (PNP) or pyridoxamine 5'-phosphate (PMP) into pyridoxal 5'-phosphate (PLP). This chain is Pyridoxine/pyridoxamine 5'-phosphate oxidase, found in Anaplasma marginale (strain St. Maries).